We begin with the raw amino-acid sequence, 74 residues long: Benzylsuccinate synthase beta subunit (74 aa).

In terms of assembly, heterohexamer composed of 2 alpha subunits, 2 beta subunits and 2 gamma subunits.

The enzyme catalyses toluene + fumarate = 2-benzylsuccinate. The protein operates within xenobiotic degradation; toluene degradation. Its activity is regulated as follows. Activated by the benzylsuccinate synthase activating enzyme BssD. Rapidly inactivated by oxygen. In terms of biological role, catalyzes the addition of fumarate to the methyl group of toluene, leading to the formation of benzylsuccinate. The polypeptide is Benzylsuccinate synthase beta subunit (bssB) (Thauera aromatica).